Here is a 337-residue protein sequence, read N- to C-terminus: Cholinesterase 2 (337 aa).

Residue S99 is the Acyl-ester intermediate of the active site. An intrachain disulfide couples C153 to C165. E224 acts as the Charge relay system in catalysis. N290 is a glycosylation site (N-linked (GlcNAc...) asparagine).

It belongs to the type-B carboxylesterase/lipase family.

It carries out the reaction an acylcholine + H2O = a carboxylate + choline + H(+). This is Cholinesterase 2 (CHE2) from Branchiostoma lanceolatum (Common lancelet).